Here is a 461-residue protein sequence, read N- to C-terminus: Cysteine--tRNA ligase (461 aa).

Residue C30 participates in Zn(2+) binding. The 'HIGH' region motif lies at 32–42 (VTIYDLCHIGH). Zn(2+) contacts are provided by C211, H236, and E240. Residues 268–272 (KMSKS) carry the 'KMSKS' region motif. An ATP-binding site is contributed by K271.

It belongs to the class-I aminoacyl-tRNA synthetase family. In terms of assembly, monomer. The cofactor is Zn(2+).

It localises to the cytoplasm. It catalyses the reaction tRNA(Cys) + L-cysteine + ATP = L-cysteinyl-tRNA(Cys) + AMP + diphosphate. The protein is Cysteine--tRNA ligase of Shewanella sp. (strain W3-18-1).